Here is a 111-residue protein sequence, read N- to C-terminus: Ig kappa chain V-III region MOPC 70 (111 aa).

Residues 1–23 (DIVLTQSPASLAVSLGQRATISC) are framework-1. Cysteines 23 and 92 form a disulfide. Positions 24-38 (RASESVDNSGISFMN) are complementarity-determining-1. The framework-2 stretch occupies residues 39-53 (WFQQKPGQPPKLLIY). Residues 54 to 60 (AASNQGS) form a complementarity-determining-2 region. The interval 61–92 (GVPARFSGSGSGTDFSLNIHPMEEDDTAMYFC) is framework-3. Positions 93–101 (QQSKEVPWT) are complementarity-determining-3. The framework-4 stretch occupies residues 102–111 (FGGGTKLEIK).

The polypeptide is Ig kappa chain V-III region MOPC 70 (Mus musculus (Mouse)).